The chain runs to 189 residues: Glycerol-3-phosphate acyltransferase (189 aa).

The next 5 helical transmembrane spans lie at 1-21, 50-70, 77-97, 111-131, and 151-171; these read MFWL…AIVL, KLAI…VLLA, LHAQ…PLYF, MLMG…LLTF, and LLAW…AMIV.

Belongs to the PlsY family. In terms of assembly, probably interacts with PlsX.

Its subcellular location is the cell inner membrane. The enzyme catalyses an acyl phosphate + sn-glycerol 3-phosphate = a 1-acyl-sn-glycero-3-phosphate + phosphate. It functions in the pathway lipid metabolism; phospholipid metabolism. Functionally, catalyzes the transfer of an acyl group from acyl-phosphate (acyl-PO(4)) to glycerol-3-phosphate (G3P) to form lysophosphatidic acid (LPA). This enzyme utilizes acyl-phosphate as fatty acyl donor, but not acyl-CoA or acyl-ACP. This Pseudomonas putida (strain GB-1) protein is Glycerol-3-phosphate acyltransferase.